The primary structure comprises 348 residues: Anthranilate phosphoribosyltransferase (348 aa).

5-phospho-alpha-D-ribose 1-diphosphate contacts are provided by residues Gly-87, 90–91, Thr-95, 97–100, 115–123, and Ser-127; these read GD, NIST, and KHGNRSASG. Gly-87 serves as a coordination point for anthranilate. A Mg(2+)-binding site is contributed by Ser-99. Asn-118 is an anthranilate binding site. Arg-173 serves as a coordination point for anthranilate. The Mg(2+) site is built by Asp-232 and Glu-233.

This sequence belongs to the anthranilate phosphoribosyltransferase family. In terms of assembly, homodimer. Requires Mg(2+) as cofactor.

The catalysed reaction is N-(5-phospho-beta-D-ribosyl)anthranilate + diphosphate = 5-phospho-alpha-D-ribose 1-diphosphate + anthranilate. The protein operates within amino-acid biosynthesis; L-tryptophan biosynthesis; L-tryptophan from chorismate: step 2/5. Its function is as follows. Catalyzes the transfer of the phosphoribosyl group of 5-phosphorylribose-1-pyrophosphate (PRPP) to anthranilate to yield N-(5'-phosphoribosyl)-anthranilate (PRA). This is Anthranilate phosphoribosyltransferase from Synechococcus sp. (strain WH7803).